A 322-amino-acid polypeptide reads, in one-letter code: 4-hydroxythreonine-4-phosphate dehydrogenase (322 aa).

A substrate-binding site is contributed by T132. H160, H205, and H260 together coordinate a divalent metal cation. Substrate contacts are provided by K268, N277, and R286.

This sequence belongs to the PdxA family. As to quaternary structure, homodimer. Zn(2+) is required as a cofactor. It depends on Mg(2+) as a cofactor. The cofactor is Co(2+).

Its subcellular location is the cytoplasm. It carries out the reaction 4-(phosphooxy)-L-threonine + NAD(+) = 3-amino-2-oxopropyl phosphate + CO2 + NADH. Its pathway is cofactor biosynthesis; pyridoxine 5'-phosphate biosynthesis; pyridoxine 5'-phosphate from D-erythrose 4-phosphate: step 4/5. Catalyzes the NAD(P)-dependent oxidation of 4-(phosphooxy)-L-threonine (HTP) into 2-amino-3-oxo-4-(phosphooxy)butyric acid which spontaneously decarboxylates to form 3-amino-2-oxopropyl phosphate (AHAP). The chain is 4-hydroxythreonine-4-phosphate dehydrogenase from Xanthomonas campestris pv. campestris (strain 8004).